The following is a 208-amino-acid chain: Protein-L-isoaspartate O-methyltransferase (208 aa).

The active site involves serine 59.

This sequence belongs to the methyltransferase superfamily. L-isoaspartyl/D-aspartyl protein methyltransferase family.

Its subcellular location is the cytoplasm. It catalyses the reaction [protein]-L-isoaspartate + S-adenosyl-L-methionine = [protein]-L-isoaspartate alpha-methyl ester + S-adenosyl-L-homocysteine. Its function is as follows. Catalyzes the methyl esterification of L-isoaspartyl residues in peptides and proteins that result from spontaneous decomposition of normal L-aspartyl and L-asparaginyl residues. It plays a role in the repair and/or degradation of damaged proteins. The polypeptide is Protein-L-isoaspartate O-methyltransferase (Yersinia pseudotuberculosis serotype O:1b (strain IP 31758)).